A 279-amino-acid chain; its full sequence is Movement protein (279 aa).

The segment at 246 to 279 is disordered; the sequence is SESEDLNVESPPAAIGSSSASRSEAFRPQVVNGL. Residues 254–268 show a composition bias toward low complexity; it reads ESPPAAIGSSSASRS.

Belongs to the cucumovirus movement protein family.

The protein resides in the host cell junction. Its subcellular location is the host plasmodesma. Its function is as follows. Transports viral genome to neighboring plant cells directly through plasmosdesmata, without any budding. The movement protein allows efficient cell to cell propagation, by bypassing the host cell wall barrier. Acts by forming a tubular structure at the host plasmodesmata, enlarging it enough to allow free passage of virion capsids. This chain is Movement protein, found in Cucurbita pepo (Vegetable marrow).